A 426-amino-acid polypeptide reads, in one-letter code: Selenate reductase subunit C (426 aa).

10 consecutive transmembrane segments (helical) span residues 5 to 25 (LYFTVLSFIAIVGVISLYIRL), 40 to 60 (WGLWIVFYIYFIGLSAGSFLL), 78 to 98 (LALFTAFFSLMAGLLFVLIDL), 119 to 139 (WEIQFYLIYMLLIVAEIWFLM), 187 to 207 (ILGIAGIPTAVGVHGGTGSLF), 223 to 243 (IIFLVSALVSGAALMLFLYSF), 261 to 281 (LLTLFIGIDLLLMIAEFLIGL), 302 to 322 (FIFWIGQIGMVIILPILLITI), 330 to 350 (MGLAGLSVVLGIVCVRWILVI), and 385 to 405 (VGLIGIVILLFSITVQLVPVF).

The protein belongs to the NrfD family. As to quaternary structure, the complex is composed of three subunits: SrdA, SrdB and SrdC.

It is found in the cell membrane. The catalysed reaction is selenite + a quinone + H2O = selenate + a quinol. In terms of biological role, component of the respiratory selenate reductase complex, which catalyzes the reduction of selenate to selenite. This subunit probably receives electrons directly from the membrane quinone pool and transfers the electrons to the iron-sulfur clusters of SrdB. May be the membrane anchor protein subunit of the complex. The polypeptide is Selenate reductase subunit C (Mesobacillus selenatarsenatis (strain DSM 18680 / JCM 14380 / FERM P-15431 / SF-1)).